A 692-amino-acid chain; its full sequence is Elongation factor G (692 aa).

A tr-type G domain is found at 8–282 (EKTRNIGIMA…AVLDYLPAPT (275 aa)). GTP contacts are provided by residues 17–24 (AHIDAGKT), 81–85 (DTPGH), and 135–138 (NKMD).

Belongs to the TRAFAC class translation factor GTPase superfamily. Classic translation factor GTPase family. EF-G/EF-2 subfamily.

Its subcellular location is the cytoplasm. Catalyzes the GTP-dependent ribosomal translocation step during translation elongation. During this step, the ribosome changes from the pre-translocational (PRE) to the post-translocational (POST) state as the newly formed A-site-bound peptidyl-tRNA and P-site-bound deacylated tRNA move to the P and E sites, respectively. Catalyzes the coordinated movement of the two tRNA molecules, the mRNA and conformational changes in the ribosome. This chain is Elongation factor G, found in Bacillus licheniformis (strain ATCC 14580 / DSM 13 / JCM 2505 / CCUG 7422 / NBRC 12200 / NCIMB 9375 / NCTC 10341 / NRRL NRS-1264 / Gibson 46).